Consider the following 1070-residue polypeptide: 3',5'-cyclic-AMP phosphodiesterase (1070 aa).

4 disordered regions span residues 1–91 (MSQE…KQDS), 166–215 (STSI…TRFQ), 487–516 (VPAS…LSQG), and 615–653 (SAGQ…RLPT). A compositionally biased stretch (low complexity) spans 51–69 (KQVQVQSQKFSSTSSTTKV). A compositionally biased stretch (polar residues) spans 70 to 84 (ATHSFSMSSSAGTTG). A compositionally biased stretch (low complexity) spans 166-210 (STSIITSSEQRTSTSTSSSSSTRYIASGSSNLAGGNSNSASSASS). The span at 488-506 (PASNKSRRPNQSSSASRSG) shows a compositional bias: polar residues. The region spanning 656-985 (VETPRENELG…DYYQSMIPPS (330 aa)) is the PDEase domain. His-732 serves as the catalytic Proton donor. 3',5'-cyclic AMP is bound at residue 732 to 736 (HNSLH). His-736, His-772, Asp-773, and Asp-890 together coordinate a divalent metal cation. Residues Asp-773, Asp-890, and Gln-941 each coordinate 3',5'-cyclic AMP. Residues 1007–1024 (EESDQENLAELEEGDESG) are compositionally biased toward acidic residues. The segment at 1007-1070 (EESDQENLAE…CQNQPQHGGM (64 aa)) is disordered. Over residues 1025-1042 (GESTTTGTTGTTAASALS) the composition is skewed to low complexity. Gly residues predominate over residues 1043–1054 (GAGGGGGGGGGM). Polar residues predominate over residues 1060-1070 (GCQNQPQHGGM).

This sequence belongs to the cyclic nucleotide phosphodiesterase family. PDE4 subfamily. In terms of assembly, monomer. The cofactor is a divalent metal cation.

The catalysed reaction is 3',5'-cyclic AMP + H2O = AMP + H(+). It participates in purine metabolism; 3',5'-cyclic AMP degradation; AMP from 3',5'-cyclic AMP: step 1/1. Functionally, hydrolyzes the second messenger cAMP, which is a key regulator of many important physiological processes. Vital for female fertility. Required for learning/memory. The protein is 3',5'-cyclic-AMP phosphodiesterase (dnc) of Drosophila melanogaster (Fruit fly).